Reading from the N-terminus, the 1128-residue chain is Testis-expressed protein 2 (1128 aa).

3 disordered regions span residues 1 to 28 (MTSL…VQRS), 71 to 99 (AKED…GLSV), and 130 to 279 (PLAL…FFKV). Over residues 130–186 (PLALSPGSSSSGPLASSPSVSSLSEQKTSSSSPLSSPSKSPVLSSSASSSALSSAKP) the composition is skewed to low complexity. Ser195 carries the post-translational modification Phosphoserine. Residues 248–274 (QFTQPRNTGGDSKTAPSSPLTSPSDTR) are compositionally biased toward polar residues. At Thr261 the chain carries Phosphothreonine. A phosphoserine mark is found at Ser264, Ser265, Ser269, and Ser294. The disordered stretch occupies residues 345-387 (KEEEGDSEGEGYGSDSNTSRSDHLKPTEDASKEVEPKGSQASS). The segment covering 364-380 (RSDHLKPTEDASKEVEP) has biased composition (basic and acidic residues). 2 consecutive transmembrane segments (helical) span residues 473–493 (TLGF…PYYM) and 495–515 (GLFL…WFFT). An N-linked (GlcNAc...) asparagine glycan is attached at Asn593. A compositionally biased stretch (basic and acidic residues) spans 645-671 (SKAQSDKEATEEKPPPEKELPSEDLKK). Disordered stretches follow at residues 645-688 (SKAQ…DPIL), 716-765 (RKPA…QKEL), 787-821 (QDNR…EEEQ), and 945-981 (ADSD…GYVG). Ser733, Ser739, Ser745, Ser749, Ser752, Ser799, and Ser816 each carry phosphoserine. Residues 736–751 (SSPSGHLSHSRSSSKG) show a composition bias toward low complexity. Positions 796–806 (PVQSAESSPTA) are enriched in polar residues. The 286-residue stretch at 817 to 1102 (EEEEQEAWVN…MPNMDDVYIP (286 aa)) folds into the SMP-LTD domain. Acidic residues predominate over residues 946–963 (DSDEESSSAGSSEEDDPP).

It localises to the endoplasmic reticulum membrane. The protein localises to the nucleus membrane. Functionally, during endoplasmic reticulum (ER) stress or when cellular ceramide levels increase, may induce contacts between the ER and medial-Golgi complex to facilitate non-vesicular transport of ceramides from the ER to the Golgi complex where they are converted to complex sphingolipids, preventing toxic ceramide accumulation. The polypeptide is Testis-expressed protein 2 (Tex2) (Mus musculus (Mouse)).